A 505-amino-acid chain; its full sequence is Protein disulfide-isomerase A3 (505 aa).

An N-terminal signal peptide occupies residues 1–24 (MRLRRLALFPGVALLLAAARLAAA). The Thioredoxin 1 domain maps to 25–133 (SDVLELTDDN…IVSHLKKQAG (109 aa)). Residues Cys-57 and Cys-60 each act as nucleophile in the active site. Residues Cys-57 and Cys-60 are joined by a disulfide bond. N6-methyllysine is present on Lys-61. Cys-85 and Cys-92 are disulfide-bonded. Lys-129 is modified (N6-succinyllysine). Lys-152 is modified (N6-acetyllysine). Lys-218 is modified (N6-succinyllysine). Lys-252 is subject to N6-acetyllysine. At Thr-319 the chain carries Phosphothreonine. The Thioredoxin 2 domain occupies 343 to 485 (SRDGKALERF…FISYLQREAT (143 aa)). Lys-362 bears the N6-acetyllysine mark. Residues Cys-406 and Cys-409 each act as nucleophile in the active site. A disulfide bridge links Cys-406 with Cys-409. The disordered stretch occupies residues 484–505 (ATNPPVIQEEKPKKKKKAQEDL). The span at 491–505 (QEEKPKKKKKAQEDL) shows a compositional bias: basic and acidic residues. The residue at position 494 (Lys-494) is an N6-acetyllysine. Positions 502–505 (QEDL) match the Prevents secretion from ER motif.

Belongs to the protein disulfide isomerase family. Part of the major histocompatibility complex class I (MHC I) peptide loading complex composed of TAP1, TAP2, B2M, MHC heavy chain, TAPBP, PDIA3, and CALR. Interacts with ERP27 and CANX. Interacts with SERPINA2 and with SERPINA1. Interacts with ATP2A2. Within the major histocompatibility complex class I (MHC I) peptide loading complex forms reversible disulfide-linked heterodimers with TAPBP as part of its protein folding chaperone activity. This is essential to assist the dynamic assembly of the MHC I complex with high affinity antigens in the endoplasmic reticulum. In terms of processing, phosphorylated.

The protein resides in the endoplasmic reticulum. It is found in the endoplasmic reticulum lumen. The protein localises to the melanosome. The catalysed reaction is Catalyzes the rearrangement of -S-S- bonds in proteins.. Its function is as follows. Protein disulfide isomerase that catalyzes the formation, isomerization, and reduction or oxidation of disulfide bonds in client proteins and functions as a protein folding chaperone. Core component of the major histocompatibility complex class I (MHC I) peptide loading complex where it functions as an essential folding chaperone for TAPBP. Through TAPBP, assists the dynamic assembly of the MHC I complex with high affinity antigens in the endoplasmic reticulum. Therefore, plays a crucial role in the presentation of antigens to cytotoxic T cells in adaptive immunity. In Chlorocebus aethiops (Green monkey), this protein is Protein disulfide-isomerase A3 (PDIA3).